A 795-amino-acid chain; its full sequence is Inactive N-acetylated-alpha-linked acidic dipeptidase-like protein 2 (795 aa).

The interval M1–N38 is disordered. Residues M1–N121 are Cytoplasmic-facing. At S92 the chain carries Phosphoserine. Residues F122 to I142 form a helical; Signal-anchor for type II membrane protein membrane-spanning segment. Residues G143 to N795 lie on the Extracellular side of the membrane. N295, N373, N534, and N759 each carry an N-linked (GlcNAc...) asparagine glycan.

The protein belongs to the peptidase M28 family. M28B subfamily. In terms of tissue distribution, expressed at higher level in kidney and placenta. In embryo, it is mainly confined to duodenal and stomach endoderm, mesonephros, metanephros and pancreas.

Its subcellular location is the membrane. May be catalytically inactive. The chain is Inactive N-acetylated-alpha-linked acidic dipeptidase-like protein 2 (NAALADL2) from Homo sapiens (Human).